Here is a 1062-residue protein sequence, read N- to C-terminus: NACHT, LRR and PYD domains-containing protein 2 (1062 aa).

Residues 1 to 94 enclose the Pyrin domain; the sequence is MVSSAQMGFN…SERAKDEVRE (94 aa). The region spanning 207–526 is the NACHT domain; the sequence is YTVVLYGPAG…LEKEEEEDRD (320 aa). 213–220 is an ATP binding site; sequence GPAGLGKT. Serine 671 carries the phosphoserine modification. LRR repeat units follow at residues 812–832, 841–861, 869–889, 898–918, 926–946, 955–976, 983–1003, and 1010–1033; these read SLTC…KLLY, FLQR…KDLA, ELTH…KFLC, KLQT…CDLT, SLLC…KFLC, NLRC…DLCS, SLVT…KMLF, and SGTL…LLEE.

The protein belongs to the NLRP family. As to quaternary structure, interacts with CHUK. Interacts with IKBKB. Interacts with IKBKG. Interacts with MEFV. Interacts with PYCARD. Interacts (via pyrin domain) with PYDC2. Interacts with CARD8. In terms of tissue distribution, expressed at high levels in lung, placenta and thymus and at lower levels in ovary, intestine and brain. Highly abundant in oocytes and early embryos, however poorly expressed in somatic tissues such as brain, kidney, liver and spinal cord.

It localises to the cytoplasm. In terms of biological role, suppresses TNF- and CD40-induced NFKB1 activity at the level of the IKK complex, by inhibiting NFKBIA degradation induced by TNF. When associated with PYCARD, activates CASP1, leading to the secretion of mature pro-inflammatory cytokine IL1B. May be a component of the inflammasome, a protein complex which also includes PYCARD, CARD8 and CASP1 and whose function would be the activation of pro-inflammatory caspases. The polypeptide is NACHT, LRR and PYD domains-containing protein 2 (NLRP2) (Homo sapiens (Human)).